The following is a 354-amino-acid chain: UDP-N-acetylglucosamine--N-acetylmuramyl-(pentapeptide) pyrophosphoryl-undecaprenol N-acetylglucosamine transferase (354 aa).

Residues 13–15, asparagine 125, arginine 161, serine 189, isoleucine 242, 261–266, and glutamine 286 contribute to the UDP-N-acetyl-alpha-D-glucosamine site; these read SGG and ALTVSE.

This sequence belongs to the glycosyltransferase 28 family. MurG subfamily.

Its subcellular location is the cell inner membrane. The enzyme catalyses di-trans,octa-cis-undecaprenyl diphospho-N-acetyl-alpha-D-muramoyl-L-alanyl-D-glutamyl-meso-2,6-diaminopimeloyl-D-alanyl-D-alanine + UDP-N-acetyl-alpha-D-glucosamine = di-trans,octa-cis-undecaprenyl diphospho-[N-acetyl-alpha-D-glucosaminyl-(1-&gt;4)]-N-acetyl-alpha-D-muramoyl-L-alanyl-D-glutamyl-meso-2,6-diaminopimeloyl-D-alanyl-D-alanine + UDP + H(+). It functions in the pathway cell wall biogenesis; peptidoglycan biosynthesis. In terms of biological role, cell wall formation. Catalyzes the transfer of a GlcNAc subunit on undecaprenyl-pyrophosphoryl-MurNAc-pentapeptide (lipid intermediate I) to form undecaprenyl-pyrophosphoryl-MurNAc-(pentapeptide)GlcNAc (lipid intermediate II). This is UDP-N-acetylglucosamine--N-acetylmuramyl-(pentapeptide) pyrophosphoryl-undecaprenol N-acetylglucosamine transferase from Buchnera aphidicola subsp. Schizaphis graminum (strain Sg).